Consider the following 555-residue polypeptide: Phosphoglucomutase (555 aa).

Residues Thr-45, Arg-49, Ser-148–His-149, and Lys-158 contribute to the substrate site. The Phosphoserine intermediate role is filled by Ser-148. Ser-148 contacts Mg(2+). Mg(2+) is bound by residues Asp-306, Asp-308, and Asp-310. Substrate-binding positions include Asp-310 to Arg-311 and Glu-393 to Ser-395.

It belongs to the phosphohexose mutase family. It depends on Mg(2+) as a cofactor.

The enzyme catalyses alpha-D-glucose 1-phosphate = alpha-D-glucose 6-phosphate. This enzyme participates in both the breakdown and synthesis of glucose. The protein is Phosphoglucomutase (celB) of Komagataeibacter xylinus (Gluconacetobacter xylinus).